Reading from the N-terminus, the 522-residue chain is 2-isopropylmalate synthase (522 aa).

One can recognise a Pyruvate carboxyltransferase domain in the interval 5–267 (VIIFDTTLRD…DCGINAKEIH (263 aa)). Asp-14, His-202, His-204, and Asn-238 together coordinate Mn(2+). The segment at 392 to 522 (QLQHMMVHSD…IHKERELGGV (131 aa)) is regulatory domain.

This sequence belongs to the alpha-IPM synthase/homocitrate synthase family. LeuA type 1 subfamily. As to quaternary structure, homodimer. Mn(2+) is required as a cofactor.

The protein localises to the cytoplasm. The enzyme catalyses 3-methyl-2-oxobutanoate + acetyl-CoA + H2O = (2S)-2-isopropylmalate + CoA + H(+). It participates in amino-acid biosynthesis; L-leucine biosynthesis; L-leucine from 3-methyl-2-oxobutanoate: step 1/4. Its function is as follows. Catalyzes the condensation of the acetyl group of acetyl-CoA with 3-methyl-2-oxobutanoate (2-ketoisovalerate) to form 3-carboxy-3-hydroxy-4-methylpentanoate (2-isopropylmalate). This is 2-isopropylmalate synthase from Shewanella frigidimarina (strain NCIMB 400).